A 719-amino-acid polypeptide reads, in one-letter code: Protein STRUBBELIG-RECEPTOR FAMILY 6 (719 aa).

The first 29 residues, 1-29 (MRENWAVVALFTLCIVGFELRFIHGATDA), serve as a signal peptide directing secretion. Residues 30–293 (SDTSALNTLF…SKKSGIGAGA (264 aa)) lie on the Extracellular side of the membrane. 6 LRR repeats span residues 97–118 (SLTE…QFPP), 119–140 (NLQR…SLSQ), 143–164 (PLKY…DFSK), 167–190 (SLTT…SSLT), 191–213 (SLKS…AGLP), and 214–234 (LETL…SLKG). Residues 242-287 (NSFNTGPAPPPPPGTPPIRGSPSRKSGGRESRSSDESTRNGDSKKS) form a disordered region. Pro residues predominate over residues 248–257 (PAPPPPPGTP). Residues 268–286 (GGRESRSSDESTRNGDSKK) show a composition bias toward basic and acidic residues. The chain crosses the membrane as a helical span at residues 294-314 (IAGIIISLLVVTALLVAFFLF). The Cytoplasmic segment spans residues 315 to 719 (RRKKSKRSSP…GSADTTSDYM (405 aa)). 2 disordered regions span residues 322–355 (SSPM…SSVE) and 364–383 (SINL…DEDS). Residues 332 to 354 (NQPFTLASNDFHENNSIQSSSSV) show a composition bias toward polar residues. S377 is modified (phosphoserine). A Protein kinase domain is found at 416–690 (FSVDNLLGEG…SEVVQALVVL (275 aa)). Residues 422-430 (LGEGTFGRV) and K444 contribute to the ATP site. Residues 700-719 (TVGVDPSQRAGSADTTSDYM) are disordered. Polar residues predominate over residues 708-719 (RAGSADTTSDYM).

This sequence belongs to the protein kinase superfamily. Ser/Thr protein kinase family. In terms of tissue distribution, expressed in seedlings, roots, stems, leaves, flowers and siliques.

It localises to the membrane. In Arabidopsis thaliana (Mouse-ear cress), this protein is Protein STRUBBELIG-RECEPTOR FAMILY 6 (SRF6).